The chain runs to 506 residues: 2,3-bisphosphoglycerate-independent phosphoglycerate mutase (506 aa).

Mn(2+) contacts are provided by aspartate 13 and serine 63. Serine 63 (phosphoserine intermediate) is an active-site residue. Residues histidine 124, 153 to 154, arginine 183, arginine 189, 254 to 257, and lysine 330 each bind substrate; these read RD and RADR. Positions 396, 400, 437, 438, and 456 each coordinate Mn(2+).

It belongs to the BPG-independent phosphoglycerate mutase family. In terms of assembly, monomer. It depends on Mn(2+) as a cofactor.

It carries out the reaction (2R)-2-phosphoglycerate = (2R)-3-phosphoglycerate. It participates in carbohydrate degradation; glycolysis; pyruvate from D-glyceraldehyde 3-phosphate: step 3/5. Catalyzes the interconversion of 2-phosphoglycerate and 3-phosphoglycerate. The chain is 2,3-bisphosphoglycerate-independent phosphoglycerate mutase from Cereibacter sphaeroides (strain ATCC 17025 / ATH 2.4.3) (Rhodobacter sphaeroides).